Reading from the N-terminus, the 508-residue chain is Glutamyl-tRNA(Gln) amidotransferase subunit B, mitochondrial (508 aa).

This sequence belongs to the GatB/GatE family. GatB subfamily. As to quaternary structure, subunit of the heterotrimeric GatFAB amidotransferase (AdT) complex, composed of A, B and F subunits.

It localises to the mitochondrion. It catalyses the reaction L-glutamyl-tRNA(Gln) + L-glutamine + ATP + H2O = L-glutaminyl-tRNA(Gln) + L-glutamate + ADP + phosphate + H(+). In terms of biological role, allows the formation of correctly charged Gln-tRNA(Gln) through the transamidation of misacylated Glu-tRNA(Gln) in the mitochondria. The reaction takes place in the presence of glutamine and ATP through an activated gamma-phospho-Glu-tRNA(Gln). The polypeptide is Glutamyl-tRNA(Gln) amidotransferase subunit B, mitochondrial (Scheffersomyces stipitis (strain ATCC 58785 / CBS 6054 / NBRC 10063 / NRRL Y-11545) (Yeast)).